The sequence spans 376 residues: Chaperone protein DnaJ (376 aa).

In terms of domain architecture, J spans 5–70 (DYYEVLGVGR…DKKAAYDQFG (66 aa)). Residues 132–210 (GLTKELKVPT…CHGNGRVEKT (79 aa)) form a CR-type zinc finger. Zn(2+) is bound by residues C145, C148, C162, C165, C184, C187, C198, and C201. 4 CXXCXGXG motif repeats span residues 145–152 (CDSCDGSG), 162–169 (CGTCHGMG), 184–191 (CPTCHGRG), and 198–205 (CSKCHGNG).

Belongs to the DnaJ family. In terms of assembly, homodimer. Zn(2+) serves as cofactor.

Its subcellular location is the cytoplasm. Its function is as follows. Participates actively in the response to hyperosmotic and heat shock by preventing the aggregation of stress-denatured proteins and by disaggregating proteins, also in an autonomous, DnaK-independent fashion. Unfolded proteins bind initially to DnaJ; upon interaction with the DnaJ-bound protein, DnaK hydrolyzes its bound ATP, resulting in the formation of a stable complex. GrpE releases ADP from DnaK; ATP binding to DnaK triggers the release of the substrate protein, thus completing the reaction cycle. Several rounds of ATP-dependent interactions between DnaJ, DnaK and GrpE are required for fully efficient folding. Also involved, together with DnaK and GrpE, in the DNA replication of plasmids through activation of initiation proteins. The protein is Chaperone protein DnaJ of Shewanella amazonensis (strain ATCC BAA-1098 / SB2B).